The primary structure comprises 189 residues: Protein GrpE (189 aa).

The tract at residues 1–24 (MADEQTVDTQNPEANQAPEASGDD) is disordered.

Belongs to the GrpE family. Homodimer.

The protein resides in the cytoplasm. Participates actively in the response to hyperosmotic and heat shock by preventing the aggregation of stress-denatured proteins, in association with DnaK and GrpE. It is the nucleotide exchange factor for DnaK and may function as a thermosensor. Unfolded proteins bind initially to DnaJ; upon interaction with the DnaJ-bound protein, DnaK hydrolyzes its bound ATP, resulting in the formation of a stable complex. GrpE releases ADP from DnaK; ATP binding to DnaK triggers the release of the substrate protein, thus completing the reaction cycle. Several rounds of ATP-dependent interactions between DnaJ, DnaK and GrpE are required for fully efficient folding. This Pseudomonas fluorescens (strain Pf0-1) protein is Protein GrpE.